A 535-amino-acid chain; its full sequence is Palmdelphin (535 aa).

Residues 1–105 are a coiled coil; sequence MEEAELLKER…KEELQVSTKE (105 aa). The tract at residues 423 to 450 is disordered; that stretch reads VVIDDDDDDDDDEEADKKGEENTKESVS. A compositionally biased stretch (acidic residues) spans 424–436; it reads VIDDDDDDDDDEE. A compositionally biased stretch (basic and acidic residues) spans 437-446; it reads ADKKGEENTK.

It belongs to the paralemmin family.

It is found in the cytoplasm. The protein resides in the cell projection. It localises to the dendrite. The protein localises to the dendritic spine. This Xenopus laevis (African clawed frog) protein is Palmdelphin (palmd).